We begin with the raw amino-acid sequence, 623 residues long: Fanconi anemia group G protein homolog (623 aa).

TPR repeat units lie at residues 251-284 (VQVY…GTTC), 349-382 (SQAK…LLGG), 458-491 (SATH…LFRT), and 517-550 (VAAL…CPGN).

As to quaternary structure, belongs to the multisubunit FA complex composed of FANCA, FANCB, FANCC, FANCE, FANCF, FANCG, FANCL/PHF9 and FANCM. In complex with FANCF, FANCA and FANCL, but not with FANCC, nor FANCE, interacts with HES1; this interaction may be essential for the stability and nuclear localization of FA core complex proteins. The complex with FANCC and FANCG may also include EIF2AK2 and HSP70. As to expression, highest expression levels in spleen, thymus and testis.

It is found in the nucleus. Its function is as follows. DNA repair protein that may operate in a postreplication repair or a cell cycle checkpoint function. May be implicated in interstrand DNA cross-link repair and in the maintenance of normal chromosome stability. Candidate tumor suppressor gene. The polypeptide is Fanconi anemia group G protein homolog (Fancg) (Mus musculus (Mouse)).